The chain runs to 97 residues: Cysteine-rich and transmembrane domain-containing protein 1 (97 aa).

Residues 1 to 40 show a composition bias toward pro residues; that stretch reads MNQENPPPYPGPGPTAPYPPYPPQPMGPGPMGGPYPPPQG. A disordered region spans residues 1–61; it reads MNQENPPPYP…QGGPQEPPKT (61 aa). The span at 41–50 shows a compositional bias: low complexity; that stretch reads YPYQGYPQYG. Residues 74–91 traverse the membrane as a helical segment; sequence LGPSTCLTACWTALCCCC.

This sequence belongs to the CYSTM1 family.

The protein resides in the membrane. This Homo sapiens (Human) protein is Cysteine-rich and transmembrane domain-containing protein 1 (CYSTM1).